Here is a 119-residue protein sequence, read N- to C-terminus: Large ribosomal subunit protein uL24 (119 aa).

The protein belongs to the universal ribosomal protein uL24 family. As to quaternary structure, part of the 50S ribosomal subunit.

In terms of biological role, one of two assembly initiator proteins, it binds directly to the 5'-end of the 23S rRNA, where it nucleates assembly of the 50S subunit. Located at the polypeptide exit tunnel on the outside of the subunit. In Saccharolobus solfataricus (strain ATCC 35092 / DSM 1617 / JCM 11322 / P2) (Sulfolobus solfataricus), this protein is Large ribosomal subunit protein uL24.